We begin with the raw amino-acid sequence, 396 residues long: Cyclic GMP-AMP synthase-like receptor (396 aa).

ATP is bound by residues Ser63 and 75–77 (EFD). The Mg(2+) site is built by Glu75, Asp77, and Asp194. Asp194 contacts GTP. Residues 241-244 (QEQE), Lys262, and 275-279 (SYYLK) each bind ATP. Mn(2+) contacts are provided by Val286, Glu287, and Asp292. A disordered region spans residues 376–396 (IMNGGNPQQSANAENGSCLSM). Polar residues predominate over residues 380 to 396 (GNPQQSANAENGSCLSM).

The protein belongs to the mab-21 family. The cofactor is Mg(2+). It depends on Mn(2+) as a cofactor.

It catalyses the reaction GTP + ATP = 2',3'-cGAMP + 2 diphosphate. It carries out the reaction GTP + ATP = pppGp(2'-5')A + diphosphate. The catalysed reaction is pppGp(2'-5')A = 2',3'-cGAMP + diphosphate. Nucleotidyltransferase that catalyzes the formation of cyclic GMP-AMP (2',3'-cGAMP) from ATP and GTP and plays a key role in innate immunity. Acts as a key sensor of double-stranded RNA (dsRNA), the presence of dsRNA in the cytoplasm being a danger signal that triggers the immune responses. Directly binds dsRNA, activating the nucleotidyltransferase activity, leading to synthesis of 2',3'-cGAMP, a second messenger that binds to and activates Sting, thereby triggering the immune response via activation of the NF-kappa-B transcription factor. This chain is Cyclic GMP-AMP synthase-like receptor, found in Aethina tumida (Small hive beetle).